The sequence spans 182 residues: Large ribosomal subunit protein uL6 (182 aa).

This sequence belongs to the universal ribosomal protein uL6 family. In terms of assembly, part of the 50S ribosomal subunit.

This protein binds to the 23S rRNA, and is important in its secondary structure. It is located near the subunit interface in the base of the L7/L12 stalk, and near the tRNA binding site of the peptidyltransferase center. The chain is Large ribosomal subunit protein uL6 from Dehalococcoides mccartyi (strain ATCC BAA-2266 / KCTC 15142 / 195) (Dehalococcoides ethenogenes (strain 195)).